The sequence spans 215 residues: Cytochrome b6 (215 aa).

A helical membrane pass occupies residues 32-52 (IFYCFGGIVFTCFLVQVATGF). A heme c-binding site is contributed by Cys-35. The heme b site is built by His-86 and His-100. A run of 3 helical transmembrane segments spans residues 90 to 110 (ASMM…TGGF), 116 to 136 (LTWV…VTGY), and 186 to 206 (AHTF…FLMI). Residues His-187 and His-202 each contribute to the heme b site.

The protein belongs to the cytochrome b family. PetB subfamily. In terms of assembly, the 4 large subunits of the cytochrome b6-f complex are cytochrome b6, subunit IV (17 kDa polypeptide, PetD), cytochrome f and the Rieske protein, while the 4 small subunits are PetG, PetL, PetM and PetN. The complex functions as a dimer. It depends on heme b as a cofactor. Requires heme c as cofactor.

It localises to the plastid. The protein localises to the chloroplast thylakoid membrane. Its function is as follows. Component of the cytochrome b6-f complex, which mediates electron transfer between photosystem II (PSII) and photosystem I (PSI), cyclic electron flow around PSI, and state transitions. The polypeptide is Cytochrome b6 (Skeletonema costatum (Marine centric diatom)).